The primary structure comprises 308 residues: MSEEDGGSMSVKSSLSSFLKILSSYNSNVLLAALVFLLLVVLFVLLLHFYARFFWSPSHQDFSAAARHRRRRRRNRRRTVTTTRIIPSLPLGGFDDGVSSPAATATRDDKGLDSSVISSIPLFVYEENEEEEDEEEECVICLGLWEAGDFGRKLRNCGHGFHVECIDMWLSSHSTCPLCRSPVLAAVSDEENLKLAVNAVEEEAEVRLQMSPAGENESNVSGDRRVSLSLSVMEDDLKTGDDDGEEEVRIEVFDDDEEINDGGTRSDRRRSMSMTSSASSSLMRMLSSSSSRSERNKVFPTARQDSSK.

A helical membrane pass occupies residues Val29–Phe49. The segment at Cys138–Arg180 adopts an RING-type; atypical zinc-finger fold. The tract at residues Val252 to Lys308 is disordered. Residues Met272–Ser291 are compositionally biased toward low complexity.

Belongs to the RING-type zinc finger family. ATL subfamily.

It localises to the membrane. The enzyme catalyses S-ubiquitinyl-[E2 ubiquitin-conjugating enzyme]-L-cysteine + [acceptor protein]-L-lysine = [E2 ubiquitin-conjugating enzyme]-L-cysteine + N(6)-ubiquitinyl-[acceptor protein]-L-lysine.. It functions in the pathway protein modification; protein ubiquitination. In Arabidopsis thaliana (Mouse-ear cress), this protein is RING-H2 finger protein ATL63 (ATL63).